A 283-amino-acid chain; its full sequence is NAD kinase (283 aa).

D69 (proton acceptor) is an active-site residue. Residues 69-70, 138-139, K166, D168, L176, 179-184, and Q235 contribute to the NAD(+) site; these read DG, NE, and TAYNLS.

Belongs to the NAD kinase family. A divalent metal cation serves as cofactor.

The protein localises to the cytoplasm. It catalyses the reaction NAD(+) + ATP = ADP + NADP(+) + H(+). Its function is as follows. Involved in the regulation of the intracellular balance of NAD and NADP, and is a key enzyme in the biosynthesis of NADP. Catalyzes specifically the phosphorylation on 2'-hydroxyl of the adenosine moiety of NAD to yield NADP. This is NAD kinase from Helicobacter acinonychis (strain Sheeba).